A 355-amino-acid polypeptide reads, in one-letter code: 6-aminohexanoate-oligomer endohydrolase (355 aa).

Residue T267 is the Nucleophile of the active site.

Belongs to the peptidase S58 family. In terms of assembly, heterotetramer composed of 4 alpha/beta heterodimers. In terms of processing, expressed as an inactive precursor that is cleaved autocatalytically at Asn266/Thr267 to generate an active enzyme composed of an alpha subunit and a beta subunit.

The enzyme catalyses [N-(6-aminohexanoyl)]n + H2O = [N-(6-aminohexanoyl)]n-x + [N-(6-aminohexanoyl)]x.. Its pathway is xenobiotic degradation; nylon-6 oligomer degradation. In terms of biological role, involved in the degradation of nylon-6 oligomers. Degrades cyclic and linear oligomers of 6-aminohexanoate (Ahx) with a degree of polymerization greater than three by an endo-type mode. Cannot use Ahx cyclic dimer or the Ahx linear dimer. This is 6-aminohexanoate-oligomer endohydrolase from Kocuria sp. (strain KY2).